A 70-amino-acid chain; its full sequence is DNA-directed RNA polymerase subunit omega (70 aa).

Belongs to the RNA polymerase subunit omega family. The RNAP catalytic core consists of 2 alpha, 1 beta, 1 beta' and 1 omega subunit. When a sigma factor is associated with the core the holoenzyme is formed, which can initiate transcription.

The enzyme catalyses RNA(n) + a ribonucleoside 5'-triphosphate = RNA(n+1) + diphosphate. Functionally, promotes RNA polymerase assembly. Latches the N- and C-terminal regions of the beta' subunit thereby facilitating its interaction with the beta and alpha subunits. The chain is DNA-directed RNA polymerase subunit omega from Bacillus cereus (strain G9842).